Consider the following 537-residue polypeptide: Glutamyl-tRNA reductase, chloroplastic (537 aa).

The N-terminal 48 residues, 1 to 48 (MMASTTSATAAGGAFAAAKTRAGSSAAGGGACARVAAGGRRRSGVVVR), are a transit peptide targeting the chloroplast. Substrate is bound by residues 134 to 137 (TCNR), serine 194, 199 to 201 (EGQ), and glutamine 205. Cysteine 135 acts as the Nucleophile in catalysis. 276 to 281 (GAGKMG) contributes to the NADP(+) binding site.

It belongs to the glutamyl-tRNA reductase family.

It is found in the plastid. The protein localises to the chloroplast. The enzyme catalyses (S)-4-amino-5-oxopentanoate + tRNA(Glu) + NADP(+) = L-glutamyl-tRNA(Glu) + NADPH + H(+). Its pathway is porphyrin-containing compound metabolism; protoporphyrin-IX biosynthesis; 5-aminolevulinate from L-glutamyl-tRNA(Glu): step 1/2. Catalyzes the NADPH-dependent reduction of glutamyl-tRNA(Glu) to glutamate 1-semialdehyde (GSA). The polypeptide is Glutamyl-tRNA reductase, chloroplastic (Oryza sativa subsp. japonica (Rice)).